A 331-amino-acid chain; its full sequence is Protoheme IX farnesyltransferase (331 aa).

9 helical membrane-spanning segments follow: residues L22–A42, F50–V70, F100–A120, I147–G167, W174–L194, I220–V240, L241–V261, A273–L293, and L307–M327.

It belongs to the UbiA prenyltransferase family. Protoheme IX farnesyltransferase subfamily.

It is found in the cell inner membrane. The enzyme catalyses heme b + (2E,6E)-farnesyl diphosphate + H2O = Fe(II)-heme o + diphosphate. The protein operates within porphyrin-containing compound metabolism; heme O biosynthesis; heme O from protoheme: step 1/1. Converts heme B (protoheme IX) to heme O by substitution of the vinyl group on carbon 2 of heme B porphyrin ring with a hydroxyethyl farnesyl side group. The protein is Protoheme IX farnesyltransferase of Synechococcus sp. (strain JA-3-3Ab) (Cyanobacteria bacterium Yellowstone A-Prime).